We begin with the raw amino-acid sequence, 399 residues long: MSNNLVLVLNCGSSSLKFAVIDAQTGDDQISGLAECFGLEDSRIKWKINGEKHEAALGAFTAHREAVEYIVNKILAEQPELAAKIQAVGHRIVHGGEKFTRSVIIDESVIKGIEDCASLAPLHNPAHLIGIRAAIASFPKLPQVAVFDTAFHQSMPDRAYVYALPYKLYREHGIRRYGMHGTSHLFVSREAAKMLNKPIEETNVICAHLGNGASVTAIKGGKSVDTSMGLTPLEGLVMGTRCGDIDPSIIYHLVHQLGYTLEEVNNLMNKQSGLLGISELTNDCRGIEEGYADGHKGATLALEIFCYRLAKYIASYTVPLGRLDAVVFTGGIGENSDLIREKVLNMLEIFNFHVDSERNKAARFGKKGIITQDKGTIAMVIPTNEEWVIAEDSIKLINK.

Asparagine 10 serves as a coordination point for Mg(2+). Residue lysine 17 coordinates ATP. Arginine 91 contributes to the substrate binding site. Aspartate 148 serves as the catalytic Proton donor/acceptor. Residues 208 to 212, 283 to 285, and 331 to 335 contribute to the ATP site; these read HLGNG, DCR, and GIGEN. Glutamate 385 serves as a coordination point for Mg(2+).

This sequence belongs to the acetokinase family. In terms of assembly, homodimer. The cofactor is Mg(2+). Mn(2+) serves as cofactor.

It localises to the cytoplasm. The catalysed reaction is acetate + ATP = acetyl phosphate + ADP. Its pathway is metabolic intermediate biosynthesis; acetyl-CoA biosynthesis; acetyl-CoA from acetate: step 1/2. Its function is as follows. Catalyzes the formation of acetyl phosphate from acetate and ATP. Can also catalyze the reverse reaction. In Shewanella baltica (strain OS223), this protein is Acetate kinase.